The chain runs to 218 residues: Uracil-DNA glycosylase (218 aa).

The active-site Proton acceptor is the aspartate 68.

Belongs to the uracil-DNA glycosylase (UDG) superfamily. UNG family. Homodimer. Interacts with protein OPG148. Component of the Uracil-DNA glycosylase(UDG)-OPG148-polymerase complex; OPG148 and UDG form a heterodimeric processivity factor that associates with OPG71 to form the processive polymerase holoenzyme.

The enzyme catalyses Hydrolyzes single-stranded DNA or mismatched double-stranded DNA and polynucleotides, releasing free uracil.. Functionally, plays an essential role in viral replication as a component of the DNA polymerase processivity factor. Excises uracil residues from the DNA which can arise as a result of misincorporation of dUMP residues by DNA polymerase or due to deamination of cytosine. The sequence is that of Uracil-DNA glycosylase (OPG116) from Homo sapiens (Human).